Consider the following 114-residue polypeptide: NAD(P)H-quinone oxidoreductase subunit M (114 aa).

It belongs to the complex I NdhM subunit family. As to quaternary structure, NDH-1 can be composed of about 15 different subunits; different subcomplexes with different compositions have been identified which probably have different functions.

The protein resides in the cellular thylakoid membrane. The enzyme catalyses a plastoquinone + NADH + (n+1) H(+)(in) = a plastoquinol + NAD(+) + n H(+)(out). It carries out the reaction a plastoquinone + NADPH + (n+1) H(+)(in) = a plastoquinol + NADP(+) + n H(+)(out). In terms of biological role, NDH-1 shuttles electrons from an unknown electron donor, via FMN and iron-sulfur (Fe-S) centers, to quinones in the respiratory and/or the photosynthetic chain. The immediate electron acceptor for the enzyme in this species is believed to be plastoquinone. Couples the redox reaction to proton translocation, and thus conserves the redox energy in a proton gradient. Cyanobacterial NDH-1 also plays a role in inorganic carbon-concentration. The chain is NAD(P)H-quinone oxidoreductase subunit M from Acaryochloris marina (strain MBIC 11017).